Here is a 619-residue protein sequence, read N- to C-terminus: UPF0329 protein ECU01_0100/ECU01_1510/ECU08_0030 (619 aa).

Residues 350 to 384 (REEREKREKREKREESKGRGKRGAGEAKEESKEED) are compositionally biased toward basic and acidic residues. The segment at 350 to 428 (REEREKREKR…GKRKGDGHHY (79 aa)) is disordered. Over residues 385-399 (GKEEEGVEAEEEESA) the composition is skewed to acidic residues. Positions 411 to 428 (ARRKKSLKGKRKGDGHHY) are enriched in basic residues.

This sequence belongs to the UPF0329 family.

This Encephalitozoon cuniculi (strain GB-M1) (Microsporidian parasite) protein is UPF0329 protein ECU01_0100/ECU01_1510/ECU08_0030.